Reading from the N-terminus, the 135-residue chain is Large ribosomal subunit protein uL16c (135 aa).

Belongs to the universal ribosomal protein uL16 family. Part of the 50S ribosomal subunit.

Its subcellular location is the plastid. The protein resides in the chloroplast. In Lepidium virginicum (Virginia pepperweed), this protein is Large ribosomal subunit protein uL16c.